A 535-amino-acid polypeptide reads, in one-letter code: Beta-amylase (535 aa).

A propeptide spans 1–2 (removed in mature form); it reads ME. Val-3 carries the post-translational modification N-acetylvaline. The substrate site is built by Asp-51, His-91, and Asp-99. Residue Glu-184 is the Proton donor of the active site. Residues Lys-293, His-298, and Thr-340 each coordinate substrate. Glu-378 functions as the Proton acceptor in the catalytic mechanism. Substrate-binding positions include 379–380 and Arg-418; that span reads NA. A run of 3 repeats spans residues 489 to 499, 500 to 510, and 511 to 521. The 4 X 11 AA tandem repeats stretch occupies residues 489-532; that stretch reads GPTGGMGGQAEGPTCGMGGQVKGPTGGMGGQAEDPTSGMGGELP. Residues 490–535 constitute a propeptide, removed in mature form; it reads PTGGMGGQAEGPTCGMGGQVKGPTGGMGGQAEDPTSGMGGELPATM. The segment at 513-535 is disordered; that stretch reads TGGMGGQAEDPTSGMGGELPATM. A 4; approximate repeat occupies 522-532; it reads DPTSGMGGELP.

It belongs to the glycosyl hydrolase 14 family. Monomer. As to expression, endosperm.

The catalysed reaction is Hydrolysis of (1-&gt;4)-alpha-D-glucosidic linkages in polysaccharides so as to remove successive maltose units from the non-reducing ends of the chains.. Functionally, catalyzes the liberation of maltose from 1,4-alpha-D glucans. This is Beta-amylase from Hordeum vulgare subsp. spontaneum (Wild barley).